Here is a 691-residue protein sequence, read N- to C-terminus: DNA ligase (691 aa).

NAD(+) is bound by residues 41-45 (DAEYD), 90-91 (SL), and Glu130. The active-site N6-AMP-lysine intermediate is the Lys132. NAD(+) contacts are provided by Arg153, Glu190, Lys307, and Lys331. Zn(2+) contacts are provided by Cys425, Cys428, Cys443, and Cys449. The BRCT domain maps to 610-691 (APQGVLAGKT…LHQLLEGNTP (82 aa)).

This sequence belongs to the NAD-dependent DNA ligase family. LigA subfamily. The cofactor is Mg(2+). Requires Mn(2+) as cofactor.

It catalyses the reaction NAD(+) + (deoxyribonucleotide)n-3'-hydroxyl + 5'-phospho-(deoxyribonucleotide)m = (deoxyribonucleotide)n+m + AMP + beta-nicotinamide D-nucleotide.. In terms of biological role, DNA ligase that catalyzes the formation of phosphodiester linkages between 5'-phosphoryl and 3'-hydroxyl groups in double-stranded DNA using NAD as a coenzyme and as the energy source for the reaction. It is essential for DNA replication and repair of damaged DNA. In Burkholderia lata (strain ATCC 17760 / DSM 23089 / LMG 22485 / NCIMB 9086 / R18194 / 383), this protein is DNA ligase.